The chain runs to 521 residues: Importin subunit alpha-3 (521 aa).

Ala2 is subject to N-acetylalanine. An IBB domain is found at 2 to 58 (ADNEKLDNQRLKNFKNKGRDLETMRRQRNEVVVELRKNKRDEHLLKRRNVPHEDICE). Positions 43 to 52 (EHLLKRRNVP) match the Nuclear localization signal motif. At Ser60 the chain carries Phosphoserine. An ARM 1; truncated repeat occupies 66–106 (YRVQNTSLEAIVQNASSDNQGIQLSAVQAARKLLSSDRNPP). 8 ARM repeats span residues 107–149 (IDDL…TSEQ), 150–194 (TQAV…CRDY), 195–233 (VISLGVVKPLLSFISPSIPITFLRNVTWVMVNLCRHKDP), 234–278 (PPPM…EQIQ), 279–318 (MVIDSGIVPHLVPLLSHQEVKVQTAALRAVGNIVTGTDEQ), 319–360 (TQVV…NQQQ), 361–400 (VQAVIDANLVPMIIHLLDKGDFGTQKEAAWAISNLTISGR), and 401–443 (KDQV…KMAE). Positions 137-229 (WALTNIASGT…VTWVMVNLCR (93 aa)) are NLS binding site (major). An NLS binding site (minor) region spans residues 306-394 (RAVGNIVTGT…QKEAAWAISN (89 aa)). The stretch at 447–485 (ETIGNLIEECGGLEKIEQLQNHENEDIYKLAYEIIDQFF) is one ARM 10; atypical repeat.

The protein belongs to the importin alpha family. Forms a complex with importin subunit beta-1 (KPNB1). Interacts with SNAI1. Interacts with TALDO1 isoform 1. Interacts with CYB1. As to quaternary structure, (Microbial infection) Interacts with MERS virus protein OF4b; this interaction prevents the translocation of NF-kappa-B complex to the nucleus. In terms of assembly, (Microbial infection) Interacts with human adenovirus 5 E1A protein; this interaction allows E1A import into the host nucleus. (Microbial infection) Interacts with Chikungunya virus capsid protein; this interaction allows the nuclear import of the viral capsid protein. Highly expressed in testis, ovary, small intestine, heart, skeletal muscle, lung and pancreas, but barely detectable in kidney, thymus, colon and peripheral blood leukocytes.

It is found in the cytoplasm. The protein resides in the nucleus. Its function is as follows. Functions in nuclear protein import as an adapter protein for nuclear receptor KPNB1. Binds specifically and directly to substrates containing either a simple or bipartite NLS motif. Docking of the importin/substrate complex to the nuclear pore complex (NPC) is mediated by KPNB1 through binding to nucleoporin FxFG repeats and the complex is subsequently translocated through the pore by an energy requiring, Ran-dependent mechanism. At the nucleoplasmic side of the NPC, Ran binds to importin-beta and the three components separate and importin-alpha and -beta are re-exported from the nucleus to the cytoplasm where GTP hydrolysis releases Ran from importin. The directionality of nuclear import is thought to be conferred by an asymmetric distribution of the GTP- and GDP-bound forms of Ran between the cytoplasm and nucleus. Mediates nuclear import of AARS1, MRTFA and RANBP3. Functionally, (Microbial infection) In vitro, mediates the nuclear import of human cytomegalovirus UL84 by recognizing a non-classical NLS. In vitro, mediates the nuclear import of human cytomegalovirus UL84 by recognizing a non-classical NLS. In Homo sapiens (Human), this protein is Importin subunit alpha-3.